Reading from the N-terminus, the 251-residue chain is Insulin-induced gene 1 protein (251 aa).

Over 1 to 58 the chain is Cytoplasmic; it reads MPRLEEHCWSCSCSTSVKTKDLSSAGWIVCKTGEMMSIITSVLSHAYGSLHSLQSANL. A helical transmembrane segment spans residues 59–81; sequence IRRGLVLFIVGVVLALVLNLLQI. Over 82 to 100 the chain is Extracellular; that stretch reads QRNVTLFPEEVLDTLFSSA. A helical membrane pass occupies residues 101 to 118; the sequence is WWIPLCCGTAAAVVGLLY. Topologically, residues 119–133 are cytoplasmic; that stretch reads PCLDHHLGEPHKFKR. The chain crosses the membrane as a helical span at residues 134–156; sequence EWASVMRCIAVFVGINHASAKLD. The Extracellular portion of the chain corresponds to 157–159; the sequence is FAN. Residues 160–178 form a helical membrane-spanning segment; sequence NVQLSLTLAALSLGLWWTF. The Cytoplasmic portion of the chain corresponds to 179–183; the sequence is DRSRS. Residues 184 to 205 traverse the membrane as a helical segment; sequence GFGLGLTTALLATLIAQLLVYN. The Extracellular portion of the chain corresponds to 206–219; that stretch reads GIYQYTSPDFLYVR. The helical transmembrane segment at 220-237 threads the bilayer; sequence SWLPCIFFSGGVTVGNIG. Residues 238–251 are Cytoplasmic-facing; the sequence is RQLAMGSTEKIHND. The KxHxx motif lies at 245 to 251; it reads TEKIHND.

The protein belongs to the INSIG family. In terms of assembly, interacts with scap; interaction is direct and only takes place in the presence of sterols; it prevents interaction between scap and the coat protein complex II (COPII). Associates with the SCAP-SREBP complex; association is mediated via its interaction with scap and only takes place in the presence of sterols.

It is found in the endoplasmic reticulum membrane. Its function is as follows. Oxysterol-binding protein that mediates feedback control of cholesterol synthesis by controlling both endoplasmic reticulum to Golgi transport of scap and degradation of hmgcr. Acts as a negative regulator of cholesterol biosynthesis by mediating the retention of the SCAP-SREBP complex in the endoplasmic reticulum, thereby blocking the processing of sterol regulatory element-binding proteins (SREBPs). Binds oxysterol, including 25-hydroxycholesterol, regulating interaction with scap and retention of the SCAP-SREBP complex in the endoplasmic reticulum. In presence of oxysterol, interacts with scap, retaining the SCAP-SREBP complex in the endoplasmic reticulum, thereby preventing scap from escorting SREBPs to the Golgi. Sterol deprivation reduces oxysterol-binding, disrupting the interaction between insig1 and scap, thereby promoting Golgi transport of the SCAP-SREBP complex, followed by processing and nuclear translocation of SREBPs. Also regulates cholesterol synthesis by regulating degradation of hmgcr. In Danio rerio (Zebrafish), this protein is Insulin-induced gene 1 protein.